The primary structure comprises 222 residues: Kinetochore protein Spc25 (222 aa).

A coiled-coil region spans residues 51-86; it reads RHQRKVGKLQKVLMERREELDKRVSFIEELDRELEA.

The protein belongs to the SPC25 family. As to quaternary structure, component of the Ndc80 complex, which is composed of Ndc80, Nuf2 and Spc25.

It localises to the nucleus. The protein localises to the chromosome. Its subcellular location is the centromere. It is found in the kinetochore. Acts as a component of the essential kinetochore-associated Ndc80 complex, which is required for chromosome segregation and spindle checkpoint activity during meiosis and mitosis. Required for kinetochore integrity and the organization of stable microtubule binding sites in the outer plate of the kinetochore. Participates in SAC signaling that responds specifically to disruptions in spindle microtubule dynamics. The NDC80 complex synergistically enhances the affinity of the SKA1 complex for microtubules and may allow the NDC80 complex to track depolymerizing microtubules. The chain is Kinetochore protein Spc25 from Drosophila mauritiana (Fruit fly).